We begin with the raw amino-acid sequence, 423 residues long: Type II methyltransferase M.BamHI (423 aa).

Basic and acidic residues predominate over residues 397 to 414 (DFRQDHEGNSKGDKKNEN). The segment at 397 to 423 (DFRQDHEGNSKGDKKNENNDQISLSLE) is disordered.

This sequence belongs to the N(4)/N(6)-methyltransferase family.

The enzyme catalyses a 2'-deoxycytidine in DNA + S-adenosyl-L-methionine = an N(4)-methyl-2'-deoxycytidine in DNA + S-adenosyl-L-homocysteine + H(+). Its function is as follows. A beta subtype methylase, recognizes the double-stranded sequence 5'-GGATCC-3', methylates C-5 on both strands, and protects the DNA from cleavage by the BamHI endonuclease. The chain is Type II methyltransferase M.BamHI from Bacillus amyloliquefaciens (Bacillus velezensis).